The chain runs to 559 residues: Urocanate hydratase (559 aa).

Residues Gly49 to Gly50, Gln127, Gly173 to Gly175, Asp193, Arg198, Asn239 to Ala240, Gln260 to His264, Tyr270 to Leu271, and Tyr319 each bind NAD(+). Cys407 is a catalytic residue. Gly489 provides a ligand contact to NAD(+).

The protein belongs to the urocanase family. It depends on NAD(+) as a cofactor.

Its subcellular location is the cytoplasm. It carries out the reaction 4-imidazolone-5-propanoate = trans-urocanate + H2O. Its pathway is amino-acid degradation; L-histidine degradation into L-glutamate; N-formimidoyl-L-glutamate from L-histidine: step 2/3. Catalyzes the conversion of urocanate to 4-imidazolone-5-propionate. The sequence is that of Urocanate hydratase from Shouchella clausii (strain KSM-K16) (Alkalihalobacillus clausii).